The primary structure comprises 442 residues: MLSFLKAPANAPLITDKHEVDARYRYWRRHILITIWLGYALFYFTRKSFNAAAPEILASGILTRSDIGLLATLFYITYGVSKFVSGIVSDRSNARYFMGIGLIATGVVNILFGFSTSLWAFALLWALNAFFQGFGSPVCARLLTAWYSRTERGGWWALWNTAHNVGGALIPLVMAAVALHYGWRVGMMVAGLLAIGVGMVLCWRLRDRPQAIGLPPVGDWRHDALEVAQQQEGAGLSRKEILAKYVLLNPYIWLLSLCYVLVYVVRAAINDWGNLYMSETLGVDLVTANTAVSMFELGGFIGALVAGWGSDKLFNGNRGPMNLIFAAGILLSVGSLWLMPFASYVMQAACFFTTGFFVFGPQMLIGMAAAECSHKEAAGAATGFVGLFAYLGASLSGWPLAKVLEIWHWTGFFAVIAIAAGISALLLLPFLNAQAPRETHEA.

The Cytoplasmic segment spans residues 1–30; it reads MLSFLKAPANAPLITDKHEVDARYRYWRRH. A helical membrane pass occupies residues 31 to 51; sequence ILITIWLGYALFYFTRKSFNA. Residues 52-66 are Periplasmic-facing; sequence AAPEILASGILTRSD. A helical transmembrane segment spans residues 67 to 87; that stretch reads IGLLATLFYITYGVSKFVSGI. The Cytoplasmic portion of the chain corresponds to 88 to 95; the sequence is VSDRSNAR. The helical transmembrane segment at 96 to 118 threads the bilayer; the sequence is YFMGIGLIATGVVNILFGFSTSL. Topologically, residues 119-121 are periplasmic; it reads WAF. A helical transmembrane segment spans residues 122–144; the sequence is ALLWALNAFFQGFGSPVCARLLT. At 145-162 the chain is on the cytoplasmic side; the sequence is AWYSRTERGGWWALWNTA. Residues 163 to 183 traverse the membrane as a helical segment; sequence HNVGGALIPLVMAAVALHYGW. Position 184 (R184) is a topological domain, periplasmic. Residues 185-205 form a helical membrane-spanning segment; the sequence is VGMMVAGLLAIGVGMVLCWRL. The Cytoplasmic portion of the chain corresponds to 206 to 244; that stretch reads RDRPQAIGLPPVGDWRHDALEVAQQQEGAGLSRKEILAK. A helical transmembrane segment spans residues 245–265; the sequence is YVLLNPYIWLLSLCYVLVYVV. The Periplasmic segment spans residues 266–289; that stretch reads RAAINDWGNLYMSETLGVDLVTAN. The helical transmembrane segment at 290–310 threads the bilayer; the sequence is TAVSMFELGGFIGALVAGWGS. Topologically, residues 311-322 are cytoplasmic; sequence DKLFNGNRGPMN. A helical transmembrane segment spans residues 323-343; that stretch reads LIFAAGILLSVGSLWLMPFAS. Topologically, residues 344-347 are periplasmic; sequence YVMQ. The chain crosses the membrane as a helical span at residues 348–368; sequence AACFFTTGFFVFGPQMLIGMA. Residues 369–379 lie on the Cytoplasmic side of the membrane; sequence AAECSHKEAAG. Residues 380–400 traverse the membrane as a helical segment; that stretch reads AATGFVGLFAYLGASLSGWPL. Residues 401–410 lie on the Periplasmic side of the membrane; the sequence is AKVLEIWHWT. Residues 411 to 431 traverse the membrane as a helical segment; it reads GFFAVIAIAAGISALLLLPFL. The Cytoplasmic segment spans residues 432–442; the sequence is NAQAPRETHEA.

Belongs to the major facilitator superfamily. Organophosphate:Pi antiporter (OPA) (TC 2.A.1.4) family.

It is found in the cell inner membrane. Functionally, part of the UhpABC signaling cascade that controls the expression of the hexose phosphate transporter UhpT. UhpC senses external glucose-6-phosphate and interacts with the histidine kinase UhpB, leading to the stimulation of the autokinase activity of UhpB. The chain is Membrane sensor protein UhpC (uhpC) from Salmonella typhimurium (strain LT2 / SGSC1412 / ATCC 700720).